The following is a 241-amino-acid chain: MAPTLSADPADRIIVALDGMAPDQALRFAAHVDGLRWVKVGLELFVQAGPEVVAQLREQGLRVFLDLKFHDIPATMAGACRRAAALGAELITVHACAGSEALKAVKVAAEEGAQAAGQPAPTLLAVTVLTSWEEQRLQRELAIAQGIAERVPALAQLSATAGIGGCVCSPLEAAALRAQHPQPFALVTPGIRPRGAAVGDQARVMGPAEAIAAGASQLVIGRPISKAEDPSAAFAACCGDL.

Substrate contacts are provided by residues aspartate 18, lysine 39, 66-75 (DLKFHDIPAT), threonine 130, arginine 192, glutamine 201, glycine 221, and arginine 222. Lysine 68 acts as the Proton donor in catalysis.

This sequence belongs to the OMP decarboxylase family. Type 1 subfamily. As to quaternary structure, homodimer.

The enzyme catalyses orotidine 5'-phosphate + H(+) = UMP + CO2. Its pathway is pyrimidine metabolism; UMP biosynthesis via de novo pathway; UMP from orotate: step 2/2. In terms of biological role, catalyzes the decarboxylation of orotidine 5'-monophosphate (OMP) to uridine 5'-monophosphate (UMP). This Synechococcus sp. (strain CC9605) protein is Orotidine 5'-phosphate decarboxylase.